Here is a 1287-residue protein sequence, read N- to C-terminus: DENN domain-containing protein 5A (1287 aa).

Positions 57-259 (STTEGENFEQ…EVPLPPPGRS (203 aa)) constitute a uDENN domain. Ser-193 is modified (phosphoserine). A cDENN domain is found at 278–414 (ELPLFDFPVK…LEFVQEVSEI (137 aa)). One can recognise a dDENN domain in the interval 416–598 (MAFGVPPEGN…IMCHDDDDKD (183 aa)). The 164-residue stretch at 787-950 (VEENTLIASL…DYFCFTNVFT (164 aa)) folds into the RUN 1 domain. In terms of domain architecture, PLAT spans 954–1062 (IPYHILIVPS…DDGSLERVLV (109 aa)). The residue at position 1079 (Thr-1079) is a Phosphothreonine. Phosphoserine occurs at positions 1085, 1087, and 1096. Positions 1134–1280 (TLLLCGECGL…QEFNITLDTS (147 aa)) constitute an RUN 2 domain.

It belongs to the RAB6IP1 family. In terms of assembly, interacts with RAB6A bound to GTP. In terms of tissue distribution, expressed in developing brain and developing neurons.

Its subcellular location is the golgi apparatus membrane. Guanine nucleotide exchange factor (GEF) which may activate RAB6A and RAB39A and/or RAB39B. Promotes the exchange of GDP to GTP, converting inactive GDP-bound Rab proteins into their active GTP-bound form. Involved in the negative regulation of neurite outgrowth. The polypeptide is DENN domain-containing protein 5A (Dennd5a) (Rattus norvegicus (Rat)).